Here is a 215-residue protein sequence, read N- to C-terminus: Cytochrome b6 (215 aa).

The chain crosses the membrane as a helical span at residues 32–52 (IFYCLGGVTLVCFIIQFATGF). Position 35 (cysteine 35) interacts with heme c. Positions 86 and 100 each coordinate heme b. 3 consecutive transmembrane segments (helical) span residues 90–110 (ASMMVLMMILHVFRVYLTGGF), 116–136 (LTWITGVVLAVITVTFGVTGY), and 186–206 (LHTFVLPWLIAVFMLLHFLMI). Histidine 187 and histidine 202 together coordinate heme b.

The protein belongs to the cytochrome b family. PetB subfamily. In terms of assembly, the 4 large subunits of the cytochrome b6-f complex are cytochrome b6, subunit IV (17 kDa polypeptide, PetD), cytochrome f and the Rieske protein, while the 4 small subunits are PetG, PetL, PetM and PetN. The complex functions as a dimer. Requires heme b as cofactor. It depends on heme c as a cofactor.

The protein localises to the cellular thylakoid membrane. In terms of biological role, component of the cytochrome b6-f complex, which mediates electron transfer between photosystem II (PSII) and photosystem I (PSI), cyclic electron flow around PSI, and state transitions. In Acaryochloris marina (strain MBIC 11017), this protein is Cytochrome b6.